Consider the following 165-residue polypeptide: Lipoprotein signal peptidase (165 aa).

Transmembrane regions (helical) follow at residues 7–27 (FFLL…KYWI), 28–48 (THTM…LYHV), 61–81 (FSHW…FWLW), and 87–107 (DKAL…GNLI). Residues aspartate 117 and aspartate 136 contribute to the active site. A helical membrane pass occupies residues 128–148 (SFAIFNLADTFITLGAISILI).

This sequence belongs to the peptidase A8 family.

Its subcellular location is the cell inner membrane. It catalyses the reaction Release of signal peptides from bacterial membrane prolipoproteins. Hydrolyzes -Xaa-Yaa-Zaa-|-(S,diacylglyceryl)Cys-, in which Xaa is hydrophobic (preferably Leu), and Yaa (Ala or Ser) and Zaa (Gly or Ala) have small, neutral side chains.. It functions in the pathway protein modification; lipoprotein biosynthesis (signal peptide cleavage). In terms of biological role, this protein specifically catalyzes the removal of signal peptides from prolipoproteins. This chain is Lipoprotein signal peptidase, found in Bartonella bacilliformis (strain ATCC 35685 / KC583 / Herrer 020/F12,63).